Reading from the N-terminus, the 244-residue chain is 3-deoxy-manno-octulosonate cytidylyltransferase (244 aa).

Belongs to the KdsB family.

It is found in the cytoplasm. It carries out the reaction 3-deoxy-alpha-D-manno-oct-2-ulosonate + CTP = CMP-3-deoxy-beta-D-manno-octulosonate + diphosphate. Its pathway is nucleotide-sugar biosynthesis; CMP-3-deoxy-D-manno-octulosonate biosynthesis; CMP-3-deoxy-D-manno-octulosonate from 3-deoxy-D-manno-octulosonate and CTP: step 1/1. It participates in bacterial outer membrane biogenesis; lipopolysaccharide biosynthesis. Activates KDO (a required 8-carbon sugar) for incorporation into bacterial lipopolysaccharide in Gram-negative bacteria. In Rickettsia canadensis (strain McKiel), this protein is 3-deoxy-manno-octulosonate cytidylyltransferase.